A 429-amino-acid polypeptide reads, in one-letter code: Cytochrome bc1 complex Rieske iron-sulfur subunit (429 aa).

Residues 1-45 (MSRADDDAVGVPPTCGGRSDEEERRIVPGPNPQDGAKDGAKATAV) are disordered. The next 3 membrane-spanning stretches (helical) occupy residues 96–116 (VAVW…IFLF), 137–157 (PLYG…AVLY), and 207–227 (FGVG…GGLI). The Rieske domain occupies 316-410 (RNPVMLIRIK…ITIDTDGYLV (95 aa)). [2Fe-2S] cluster-binding residues include cysteine 353, histidine 355, cysteine 372, and histidine 375. An intrachain disulfide couples cysteine 358 to cysteine 374.

It belongs to the Rieske iron-sulfur protein family. As to quaternary structure, the cytochrome bc1 complex is composed of a cytochrome b (QcrB), the Rieske iron-sulfur protein (QcrA) and a diheme cytochrome c (QcrC) subunit. [2Fe-2S] cluster is required as a cofactor.

The protein resides in the cell membrane. In terms of biological role, iron-sulfur subunit of the cytochrome bc1 complex, an essential component of the respiratory electron transport chain required for ATP synthesis. The bc1 complex catalyzes the oxidation of menaquinol and the reduction of cytochrome c in the respiratory chain. The bc1 complex operates through a Q-cycle mechanism that couples electron transfer to generation of the proton gradient that drives ATP synthesis. The sequence is that of Cytochrome bc1 complex Rieske iron-sulfur subunit (qcrA) from Mycobacterium tuberculosis (strain CDC 1551 / Oshkosh).